Reading from the N-terminus, the 204-residue chain is MSAQDKLIKPSHLITMDDIIREGNPTLRAVAKEVSLPLCDEDILLGEKMMQFLKHSQNPVMAEKLGLRAGVGLAAPQIDVSKRIIAVLVPNLPDKEGNPPKEAYSWQEVLYNPKIVSHSVQDAALSDGEGCLSVDRVVEGYVVRHARVTVDYYDKEGQQHRIKLKGYNAIVVQHEIDHINGVLFYDRINAKNPFETKEELLILD.

Residues Cys-131 and His-174 each contribute to the Fe cation site. Glu-175 is an active-site residue. Residue His-178 participates in Fe cation binding.

This sequence belongs to the polypeptide deformylase family. Requires Fe(2+) as cofactor.

The enzyme catalyses N-terminal N-formyl-L-methionyl-[peptide] + H2O = N-terminal L-methionyl-[peptide] + formate. In terms of biological role, removes the formyl group from the N-terminal Met of newly synthesized proteins. Requires at least a dipeptide for an efficient rate of reaction. N-terminal L-methionine is a prerequisite for activity but the enzyme has broad specificity at other positions. This chain is Peptide deformylase, found in Streptococcus pyogenes serotype M49 (strain NZ131).